We begin with the raw amino-acid sequence, 180 residues long: Cell division protein SepF (180 aa).

The segment at 21–40 is disordered; it reads LDDDYDDGRAVGRDDRRAMH. Positions 27–40 are enriched in basic and acidic residues; that stretch reads DGRAVGRDDRRAMH.

It belongs to the SepF family. Homodimer. Interacts with FtsZ.

It localises to the cytoplasm. Functionally, cell division protein that is part of the divisome complex and is recruited early to the Z-ring. Probably stimulates Z-ring formation, perhaps through the cross-linking of FtsZ protofilaments. Its function overlaps with FtsA. In Frankia casuarinae (strain DSM 45818 / CECT 9043 / HFP020203 / CcI3), this protein is Cell division protein SepF.